A 27-amino-acid chain; its full sequence is Delta-actitoxin-Avd2a (27 aa).

Cystine bridges form between Cys-3–Cys-17, Cys-4–Cys-11, and Cys-6–Cys-22.

It belongs to the sea anemone short toxin (type III) family.

The protein localises to the secreted. Its subcellular location is the nematocyst. Specific arthropod (crab and insect) toxin that inhibits inactivation of voltage-gated sodium channels. It competes well with the site-3 toxin LqhalphaIT (from the scorpion L.quinquestriatus (AC P17728)) on binding to cockroach neuronal membranes (Ki=21.4 nM), and inhibits the inactivation of D.melanogaster channel (DmNav1), but not that of mammalian Navs expressed in Xenopus oocytes. Its activity is synergically enhanced by ligands of receptor site-4 (Bj-xtrIT (AC P56637)). Its ability to inhibit the channel mutant DmNav1[D1701R] only decreases 5-fold, whereas the inhibition activity is completely lost by LqhalphaIT and Av2 when tested on DmNav1[D1701R]. This chain is Delta-actitoxin-Avd2a, found in Anemonia sulcata (Mediterranean snakelocks sea anemone).